The following is a 250-amino-acid chain: Protein KPLCE (250 aa).

Skin-specific.

This chain is Protein KPLCE, found in Homo sapiens (Human).